The chain runs to 812 residues: Probable phosphoketolase (812 aa).

Belongs to the XFP family. Requires thiamine diphosphate as cofactor.

The chain is Probable phosphoketolase from Thermosynechococcus vestitus (strain NIES-2133 / IAM M-273 / BP-1).